Here is a 434-residue protein sequence, read N- to C-terminus: Sodium/bile acid cotransporter 5 (434 aa).

The signal sequence occupies residues 1 to 18; the sequence is MSGKLFIILLLLVTPGEA. Residues 19–129 lie on the Extracellular side of the membrane; it reads RKSFLRFLNI…VSVFRQTEDS (111 aa). N-linked (GlcNAc...) asparagine glycans are attached at residues N73 and N96. A helical membrane pass occupies residues 130-150; it reads LFQEPIHVNSSVFLLVLLMIL. The Cytoplasmic segment spans residues 151–172; that stretch reads LNKCAFGCKIELQVLQTVWKRP. The chain crosses the membrane as a helical span at residues 173–193; it reads LPILLGAVTQFFLMPFCGFLL. At 194–195 the chain is on the extracellular side; sequence SQ. The chain crosses the membrane as a helical span at residues 196–216; sequence ILGLSKAQAFGFVMTCTCPGG. Over 217-232 the chain is Cytoplasmic; sequence GGGYLFALLLEGDVTL. The chain crosses the membrane as a helical span at residues 233–255; the sequence is AILMACTSTSLALIMMPVNSYLY. Over 256-268 the chain is Extracellular; it reads SCLLGLAGVFHVP. The chain crosses the membrane as a helical span at residues 269–289; that stretch reads VLKIVSTLLFILTPVSIGIVI. The Cytoplasmic segment spans residues 290–306; the sequence is KHRMPKKAVCLERVVQP. Residues 307–327 traverse the membrane as a helical segment; the sequence is LSLTLMLVGVYLAFRMGLVFL. Residues 328–331 are Extracellular-facing; that stretch reads RMAN. Residues 332 to 352 form a helical membrane-spanning segment; it reads LEVFLLGLLVPVLGFSFGYSF. At 353–365 the chain is on the cytoplasmic side; sequence AKVYLLPLPVCKT. A helical transmembrane segment spans residues 366 to 386; that stretch reads VAIESGMLNSFLALAIIQLSF. The Extracellular portion of the chain corresponds to 387–395; it reads PQSKAYEAS. Residues 396-416 form a helical membrane-spanning segment; it reads VAPFTVAMCSSCEMLLLLLVY. At 417–434 the chain is on the cytoplasmic side; it reads KAKKRPLLSTENEKAPLV.

It belongs to the bile acid:sodium symporter (BASS) (TC 2.A.28) family.

The protein resides in the membrane. The chain is Sodium/bile acid cotransporter 5 (Slc10a5) from Rattus norvegicus (Rat).